The following is a 377-amino-acid chain: Benzylmalonyl-CoA dehydrogenase (377 aa).

Residues 123 to 132 (ICMTEPNAGS), 156 to 158 (WIT), Arg266, Gln277, and 363 to 365 (TSE) each bind FAD.

This sequence belongs to the acyl-CoA dehydrogenase family. Homotetramer. The cofactor is FAD.

The catalysed reaction is (2-aminobenzyl)malonyl-CoA + O2 + H(+) = (E)-2-aminocinnamoyl-CoA + H2O2 + CO2. It catalyses the reaction benzylmalonyl-CoA + O2 + H(+) = (E)-cinnamoyl-CoA + H2O2 + CO2. Functionally, involved in degradation of indoleacetate, the most common member of the auxin class of plant hormones. Catalyzes the irreversible oxidative decarboxylation of (2-aminobenzyl)malonyl-CoA to 2-aminocinnamoyl-CoA and CO(2). In vitro, shows high catalytic efficiency with benzylmalonyl-CoA, a chemical analog of the physiological substrate, but otherwise accepts only a few medium-chain alkylmalonyl-CoA compounds as alternative substrates with low activities. The sequence is that of Benzylmalonyl-CoA dehydrogenase from Aromatoleum aromaticum (strain DSM 19018 / LMG 30748 / EbN1) (Azoarcus sp. (strain EbN1)).